Here is a 274-residue protein sequence, read N- to C-terminus: NADPH-dependent 7-cyano-7-deazaguanine reductase (274 aa).

Residue 80–82 coordinates substrate; sequence VES. An NADPH-binding site is contributed by 82 to 83; that stretch reads SK. The Thioimide intermediate role is filled by C181. Residue D188 is the Proton donor of the active site. A substrate-binding site is contributed by 220–221; that stretch reads HE. 249-250 lines the NADPH pocket; that stretch reads RG.

Belongs to the GTP cyclohydrolase I family. QueF type 2 subfamily. Homodimer.

It localises to the cytoplasm. It carries out the reaction 7-aminomethyl-7-carbaguanine + 2 NADP(+) = 7-cyano-7-deazaguanine + 2 NADPH + 3 H(+). Its pathway is tRNA modification; tRNA-queuosine biosynthesis. Its function is as follows. Catalyzes the NADPH-dependent reduction of 7-cyano-7-deazaguanine (preQ0) to 7-aminomethyl-7-deazaguanine (preQ1). The protein is NADPH-dependent 7-cyano-7-deazaguanine reductase of Paraburkholderia xenovorans (strain LB400).